The chain runs to 306 residues: Pantothenate kinase (306 aa).

90–97 (GSVAVGKS) contributes to the ATP binding site.

Belongs to the prokaryotic pantothenate kinase family.

It is found in the cytoplasm. The catalysed reaction is (R)-pantothenate + ATP = (R)-4'-phosphopantothenate + ADP + H(+). It participates in cofactor biosynthesis; coenzyme A biosynthesis; CoA from (R)-pantothenate: step 1/5. The sequence is that of Pantothenate kinase from Lactococcus lactis subsp. cremoris (strain MG1363).